An 860-amino-acid polypeptide reads, in one-letter code: Beta-glucosidase 1 (860 aa).

The first 19 residues, 1–19 (MKLSWLEAAALTAASVVSA), serve as a signal peptide directing secretion. 3 N-linked (GlcNAc...) asparagine glycosylation sites follow: Asn61, Asn211, and Asn252. The active site involves Asp280. Asn315, Asn322, Asn354, Asn387, Asn442, Asn523, Asn542, Asn564, Asn658, Asn668, Asn690, and Asn712 each carry an N-linked (GlcNAc...) asparagine glycan.

The protein belongs to the glycosyl hydrolase 3 family.

It catalyses the reaction Hydrolysis of terminal, non-reducing beta-D-glucosyl residues with release of beta-D-glucose.. The protein operates within glycan metabolism; cellulose degradation. The polypeptide is Beta-glucosidase 1 (Aspergillus aculeatus).